The following is a 183-amino-acid chain: ATP synthase subunit delta (183 aa).

This sequence belongs to the ATPase delta chain family. In terms of assembly, F-type ATPases have 2 components, F(1) - the catalytic core - and F(0) - the membrane proton channel. F(1) has five subunits: alpha(3), beta(3), gamma(1), delta(1), epsilon(1). CF(0) has four main subunits: a(1), b(1), b'(1) and c(10-14). The alpha and beta chains form an alternating ring which encloses part of the gamma chain. F(1) is attached to F(0) by a central stalk formed by the gamma and epsilon chains, while a peripheral stalk is formed by the delta, b and b' chains.

The protein localises to the cellular thylakoid membrane. F(1)F(0) ATP synthase produces ATP from ADP in the presence of a proton or sodium gradient. F-type ATPases consist of two structural domains, F(1) containing the extramembraneous catalytic core and F(0) containing the membrane proton channel, linked together by a central stalk and a peripheral stalk. During catalysis, ATP synthesis in the catalytic domain of F(1) is coupled via a rotary mechanism of the central stalk subunits to proton translocation. Functionally, this protein is part of the stalk that links CF(0) to CF(1). It either transmits conformational changes from CF(0) to CF(1) or is implicated in proton conduction. This chain is ATP synthase subunit delta, found in Prochlorococcus marinus (strain SARG / CCMP1375 / SS120).